The primary structure comprises 225 residues: MKDIIPLLSQLPQDNFFLERSLHNLGYDIIAGTDEVGRGPLAGPVIAAAVILPADCDHHLFQDSKILSHKKRVHLFQLLTEIDAFIGIGTVSEKIIDEINILQASLLAMKLAIEDLASNCSRPSFLLVDGKFKVPIDLAQVALIKGESKSASIAAASIVAKVTRDRYMQDLHSQYPQYGFNTNSGYPTKKHREAIGEFGITCYHRRSFKGVKEYVDISQEKGGRG.

Positions 28 to 220 (DIIAGTDEVG…VKEYVDISQE (193 aa)) constitute an RNase H type-2 domain. Positions 34, 35, and 129 each coordinate a divalent metal cation.

The protein belongs to the RNase HII family. The cofactor is Mn(2+). It depends on Mg(2+) as a cofactor.

It is found in the cytoplasm. The catalysed reaction is Endonucleolytic cleavage to 5'-phosphomonoester.. Endonuclease that specifically degrades the RNA of RNA-DNA hybrids. This chain is Ribonuclease HII, found in Desulfotalea psychrophila (strain LSv54 / DSM 12343).